We begin with the raw amino-acid sequence, 309 residues long: NADH-cytochrome b5 reductase 1 (309 aa).

Residues 30–50 (FVPYAVALTAILAGLKLFTGG) traverse the membrane as a helical segment. In terms of domain architecture, FAD-binding FR-type spans 60–165 (TEFQEFVLKE…RGPKGAMVYT (106 aa)). Residues 145 to 160 (TTLKIGDTMKVRGPKG) and 171 to 208 (HIGMIAGGTGITPMLQIIKAVIRNRPRNGGNDTTKLDL) each bind FAD.

Belongs to the flavoprotein pyridine nucleotide cytochrome reductase family. Monomer. Component of the 2-(3-amino-3-carboxypropyl)histidine synthase complex composed of dph1, dph2, dph3 and a NADH-dependent reductase, predominantly cbr1. Requires FAD as cofactor.

It is found in the mitochondrion outer membrane. The catalysed reaction is 2 Fe(III)-[cytochrome b5] + NADH = 2 Fe(II)-[cytochrome b5] + NAD(+) + H(+). It carries out the reaction 2 Fe(3+)-[Dph3] + NADH = 2 Fe(2+)-[Dph3] + NAD(+) + H(+). The protein operates within protein modification; peptidyl-diphthamide biosynthesis. NADH-dependent reductase for dph3 and cytochrome b5. Required for the first step of diphthamide biosynthesis, a post-translational modification of histidine which occurs in elongation factor 2. Dph1 and dph2 transfer a 3-amino-3-carboxypropyl (ACP) group from S-adenosyl-L-methionine (SAM) to a histidine residue, the reaction is assisted by a reduction system comprising dph3 and a NADH-dependent reductase, predominantly cbr1. By reducing dph3, also involved in the formation of the tRNA wobble base modification mcm5s 2U (5-methoxycarbonylmethyl-2-thiouridine), mediated by the elongator complex. The cytochrome b5/NADH cytochrome b5 reductase electron transfer system supports the catalytic activity of several sterol biosynthetic enzymes. This is NADH-cytochrome b5 reductase 1 (cbr1) from Neosartorya fischeri (strain ATCC 1020 / DSM 3700 / CBS 544.65 / FGSC A1164 / JCM 1740 / NRRL 181 / WB 181) (Aspergillus fischerianus).